The chain runs to 144 residues: Putative golgin subfamily A member 2B (144 aa).

2 disordered regions span residues M1–L20 and S95–G132. Positions A110–A131 are enriched in gly residues.

Belongs to the GOLGA2 family.

This chain is Putative golgin subfamily A member 2B (GOLGA2P5), found in Homo sapiens (Human).